A 361-amino-acid chain; its full sequence is Queuine tRNA-ribosyltransferase (361 aa).

Asp-92 (proton acceptor) is an active-site residue. Residues 92–96 (DSGGF), Asp-146, Gln-189, and Gly-216 each bind substrate. The tract at residues 247–253 (GVGKPVD) is RNA binding. Asp-266 acts as the Nucleophile in catalysis. Positions 271–275 (TRSGR) are RNA binding; important for wobble base 34 recognition. The Zn(2+) site is built by Cys-304, Cys-306, Cys-309, and His-335.

This sequence belongs to the queuine tRNA-ribosyltransferase family. As to quaternary structure, homodimer. Within each dimer, one monomer is responsible for RNA recognition and catalysis, while the other monomer binds to the replacement base PreQ1. The cofactor is Zn(2+).

It catalyses the reaction 7-aminomethyl-7-carbaguanine + guanosine(34) in tRNA = 7-aminomethyl-7-carbaguanosine(34) in tRNA + guanine. Its pathway is tRNA modification; tRNA-queuosine biosynthesis. Its function is as follows. Catalyzes the base-exchange of a guanine (G) residue with the queuine precursor 7-aminomethyl-7-deazaguanine (PreQ1) at position 34 (anticodon wobble position) in tRNAs with GU(N) anticodons (tRNA-Asp, -Asn, -His and -Tyr). Catalysis occurs through a double-displacement mechanism. The nucleophile active site attacks the C1' of nucleotide 34 to detach the guanine base from the RNA, forming a covalent enzyme-RNA intermediate. The proton acceptor active site deprotonates the incoming PreQ1, allowing a nucleophilic attack on the C1' of the ribose to form the product. After dissociation, two additional enzymatic reactions on the tRNA convert PreQ1 to queuine (Q), resulting in the hypermodified nucleoside queuosine (7-(((4,5-cis-dihydroxy-2-cyclopenten-1-yl)amino)methyl)-7-deazaguanosine). This is Queuine tRNA-ribosyltransferase from Rickettsia africae (strain ESF-5).